A 233-amino-acid polypeptide reads, in one-letter code: Probable GTP-binding protein EngB (233 aa).

An EngB-type G domain is found at 23 to 209 (AVPEVAFAGR…QRIVAGWLCL (187 aa)). Residues 31–38 (GRSNAGKS), 58–62 (GRTQH), 82–85 (DLPG), 149–152 (TKAD), and 188–190 (FSS) contribute to the GTP site. Residues S38 and T60 each contribute to the Mg(2+) site.

The protein belongs to the TRAFAC class TrmE-Era-EngA-EngB-Septin-like GTPase superfamily. EngB GTPase family. It depends on Mg(2+) as a cofactor.

Its function is as follows. Necessary for normal cell division and for the maintenance of normal septation. This is Probable GTP-binding protein EngB from Ralstonia pickettii (strain 12J).